We begin with the raw amino-acid sequence, 556 residues long: MKSDIEIAQSIALKPITEIVEKVGIAFDDIELYGKYKAKLSFDKINEVKSNPVGKLILVTAINPTPAGEGKSTMSIGLADALNKIGKKTMIALREPSLGPVMGIKGGAAGGGYAQVLPMEDINLHFTGDMHAITTANNALSALIDNHLQQGNELGIDQRRIIWKRVLDLNDRALRHVIVGLGSPVNGVPREDGFDITVASEIMAILCLATDLKDLKERLANIVVAYDYNRKPVYVRDLKVEGALTLILRDAIKPNLVQTIYGTPALVHGGPFANIAHGCNSVLATSTALRLADYTVTEAGFGADLGAEKFLDIKVPNLPTSPDAVVVVATLRALKMHGGVAKTDLNQENVEAVRAGFANLERHVNNMRQYGVPVVVAINEFVADTEAEIAVLKELCQSIDVPVELASVWANGAEGGVALAETVVKVIEQEKANYQRLYNDQDSVEEKVRKIVKNIYGGDAVQFSAKAKNQLKQFAEFGWDKLPVCMAKTQYSFSDNPNLLGAPSGFDITIREFVPKTGAGFIVALTGDVMTMPGLPKHPAALNMDVSEEGTAIGLF.

65–72 (TPAGEGKS) serves as a coordination point for ATP.

This sequence belongs to the formate--tetrahydrofolate ligase family.

It carries out the reaction (6S)-5,6,7,8-tetrahydrofolate + formate + ATP = (6R)-10-formyltetrahydrofolate + ADP + phosphate. Its pathway is one-carbon metabolism; tetrahydrofolate interconversion. In Streptococcus uberis (strain ATCC BAA-854 / 0140J), this protein is Formate--tetrahydrofolate ligase.